A 153-amino-acid chain; its full sequence is Endoribonuclease YbeY (153 aa).

Residues His114, His118, and His124 each coordinate Zn(2+).

The protein belongs to the endoribonuclease YbeY family. Requires Zn(2+) as cofactor.

The protein localises to the cytoplasm. Single strand-specific metallo-endoribonuclease involved in late-stage 70S ribosome quality control and in maturation of the 3' terminus of the 16S rRNA. In Shewanella baltica (strain OS155 / ATCC BAA-1091), this protein is Endoribonuclease YbeY.